Here is a 471-residue protein sequence, read N- to C-terminus: Glutamate--tRNA ligase 1 (471 aa).

The 'HIGH' region motif lies at 15–25 (PSPTGYLHIGG). The short motif at 243–247 (KLSKR) is the 'KMSKS' region element. Lysine 246 serves as a coordination point for ATP.

This sequence belongs to the class-I aminoacyl-tRNA synthetase family. Glutamate--tRNA ligase type 1 subfamily. As to quaternary structure, monomer.

The protein localises to the cytoplasm. The enzyme catalyses tRNA(Glu) + L-glutamate + ATP = L-glutamyl-tRNA(Glu) + AMP + diphosphate. Functionally, catalyzes the attachment of glutamate to tRNA(Glu) in a two-step reaction: glutamate is first activated by ATP to form Glu-AMP and then transferred to the acceptor end of tRNA(Glu). The sequence is that of Glutamate--tRNA ligase 1 from Cereibacter sphaeroides (strain ATCC 17029 / ATH 2.4.9) (Rhodobacter sphaeroides).